The primary structure comprises 246 residues: Small ribosomal subunit protein uS3 (246 aa).

Residues 19 to 98 (IDEWLAQNFY…NPMLDARVQA (80 aa)) enclose the KH type-2 domain. Residues 218–246 (LQEETASTLREHMEAARPGEEHEEDREES) are disordered. Residues 226-237 (LREHMEAARPGE) are compositionally biased toward basic and acidic residues.

It belongs to the universal ribosomal protein uS3 family. As to quaternary structure, part of the 30S ribosomal subunit.

In terms of biological role, binds the lower part of the 30S subunit head. The protein is Small ribosomal subunit protein uS3 of Aeropyrum pernix (strain ATCC 700893 / DSM 11879 / JCM 9820 / NBRC 100138 / K1).